Here is a 341-residue protein sequence, read N- to C-terminus: S-adenosylmethionine:tRNA ribosyltransferase-isomerase (341 aa).

The protein belongs to the QueA family. In terms of assembly, monomer.

It is found in the cytoplasm. It catalyses the reaction 7-aminomethyl-7-carbaguanosine(34) in tRNA + S-adenosyl-L-methionine = epoxyqueuosine(34) in tRNA + adenine + L-methionine + 2 H(+). It participates in tRNA modification; tRNA-queuosine biosynthesis. In terms of biological role, transfers and isomerizes the ribose moiety from AdoMet to the 7-aminomethyl group of 7-deazaguanine (preQ1-tRNA) to give epoxyqueuosine (oQ-tRNA). The chain is S-adenosylmethionine:tRNA ribosyltransferase-isomerase from Acetivibrio thermocellus (strain ATCC 27405 / DSM 1237 / JCM 9322 / NBRC 103400 / NCIMB 10682 / NRRL B-4536 / VPI 7372) (Clostridium thermocellum).